A 623-amino-acid polypeptide reads, in one-letter code: MFLEEYDVIVVGAGHAGCEAAAASANLGCSTLLVTMSLQNIAQMSCNPAMGGIAKGQIVREIDALGGYSGIVSDNTAIQFKMLNKSKGPAMWSPRVQSDRMRFAEEWRLMLEGTPNLDFYQEMVSGMVIENNKVLGIKTSLGLTIRGKSVVLTNGTFLNGLIHIGDKQFGGGRAGESAAYGITEDLVKAGFESGRMKTGTPPRVDGRSLDYSKMNVEAGDINPSKFSYSDVTKPLVHQRDCHMTYTSLLVHDILREGFERSPMFNGRIKSLGPRYCPSIEDKINRFADKDRHQLFVEPEGWNTCEVYVNGFSTSLPEDIQFKALRSVVGFEKVKFFRAGYAIEYDYFPPTQLKHTLETKLISGLYFAGQINGTTGYEEAASQGLMAGINAALKVKEKEPLILKRDEAYIGVLIDDLITKGTEEPYRMFTSRAEFRTLLRQDNADFRLTPMSNTLGLASDARLRRMEHKLNESEKMVAFFKETSITPTEANPVLIAKKTAEVNQTDKIFKILSRPQIDLSDVLKFENVANYVANNNVDQEILEQAEIQVKYSGYIDKERANAEKLTRLEDLKIPEKFDYHQIKSMSIEAKQKLSKIRPVTISQASRISGVSPSDISVLLVFLGR.

Position 12-17 (12-17 (GAGHAG)) interacts with FAD. 272-286 (GPRYCPSIEDKINRF) is a binding site for NAD(+).

Belongs to the MnmG family. Homodimer. Heterotetramer of two MnmE and two MnmG subunits. It depends on FAD as a cofactor.

It is found in the cytoplasm. NAD-binding protein involved in the addition of a carboxymethylaminomethyl (cmnm) group at the wobble position (U34) of certain tRNAs, forming tRNA-cmnm(5)s(2)U34. This Flavobacterium psychrophilum (strain ATCC 49511 / DSM 21280 / CIP 103535 / JIP02/86) protein is tRNA uridine 5-carboxymethylaminomethyl modification enzyme MnmG.